The sequence spans 354 residues: Erythroferrone (354 aa).

Residues 1-28 (MAPARRPAGARLLLVYAGLLAAAAAGLG) form the signal peptide. Composition is skewed to low complexity over residues 26–37 (GLGSPEPGAPSR) and 51–62 (PRGPGESRAGPA). The segment at 26–123 (GLGSPEPGAP…PGPPGPQGPP (98 aa)) is disordered. Over residues 69–80 (TAERAHSVDPRD) the composition is skewed to basic and acidic residues. Positions 94-107 (NGKKRSRGKAKKLK) are enriched in basic residues. Pro111, Pro113, Pro114, Pro116, Pro117, and Pro119 each carry hydroxyproline. Positions 111-123 (PGPPGPPGPQGPP) are enriched in pro residues. Positions 199-354 (APRVEAAFLC…SHFSAVLLGV (156 aa)) constitute a C1q domain. N-linked (GlcNAc...) asparagine glycosylation is found at Asn243, Asn295, and Asn333.

The protein belongs to the adipolin/erythroferrone family. In terms of assembly, homodimer; disulfide-linked. Forms trimer, hexamers and higher molecular weight oligomers. May form heteromeric complexes with C1QTNF2 and C1QTNF12 and, to a lesser extent, with C1QTNF5 and C1QTNF10. Interacts with BMP5 and BMP7; the interaction inhibits BMP-induced transcription of HAMP. Interacts with BMP6; the interaction inhibits BMP-induced transcription of HAMP. Interacts with BMP2. Interacts with heterodimers composed of BMP2 and BMP6 in vitro, the interaction inhibits the heterodimer binding to its receptor BMPR1A /ALK3 and thereby suppresses expression of HAMP. N-glycosylated; required for secretion of the mature protein.

The protein resides in the secreted. Functionally, iron-regulatory hormone that acts as an erythroid regulator after hemorrhage: produced by erythroblasts following blood loss and mediates suppression of hepcidin (HAMP) expression in the liver, thereby promoting increased iron absorption and mobilization from stores. Promotes lipid uptake into adipocytes and hepatocytes via transcriptional up-regulation of genes involved in fatty acid uptake. Inhibits apoptosis and inflammatory response in cardiomyocytes via promotion of sphingosine-1-phosphate (S1P) and cAMP-dependent activation of AKT signaling. Inhibits autophagy induced by nutrient deficiency in hepatocytes via promoting the phosphorylation of IRS1, AKT, and MTOR, and thereby subsequent activation of the AKT-MTOR signaling pathway. Negatively regulates the differentiation of osteoblasts, potentially via sequestering BMP2, and thereby inhibits the activation of SMAD signaling. The reduction in BMP2 signaling in osteoblasts also results in an increase in expression of the osteoclastogenesis-promoting factors TNFSF11/RANKL and SOST, thereby indirectly promotes bone resorption. The polypeptide is Erythroferrone (Homo sapiens (Human)).